The sequence spans 952 residues: Meiosis-specific coiled-coil domain-containing protein MEIOC (952 aa).

Disordered regions lie at residues 1–23 (MEVR…EGLE), 609–629 (QAKP…LDGL), and 933–952 (VHES…TNKH). Basic and acidic residues predominate over residues 617–627 (YDPEEGPKHLD). The span at 936 to 952 (SINSSNPMNQRGETNKH) shows a compositional bias: polar residues.

In terms of assembly, interacts with YTHDC2; binds transcript that regulate the mitotic cell cycle inhibiting progression into metaphase, thereby allowing meiotic prophase to proceed normally. Interacts with RBM46. As to expression, expressed in fetal ovaries. Expressed in testis.

The protein resides in the cytoplasm. It is found in the nucleus. Is required for meiosis completion in both male and female germ cells. Confers stability to numerous meiotic mRNAs in gonads allowing proper initiation and progression into meiosis prophase I. The function may involve YTHDC2 and is independent of induction by retinoic acid (RA). Maintains an extended meiotic prophase I by properly promoting the transition from a mitotic to a meiotic cell cycle program by binding transcripts through its interaction with YTHDC2 that regulate the mitotic cell cycle. In Homo sapiens (Human), this protein is Meiosis-specific coiled-coil domain-containing protein MEIOC.